Reading from the N-terminus, the 246-residue chain is Putative 4'-phosphopantetheinyl transferase slr0495 (246 aa).

Positions 110 and 156 each coordinate Mg(2+).

The protein belongs to the P-Pant transferase superfamily. Gsp/Sfp/HetI/AcpT family. Mg(2+) serves as cofactor.

In terms of biological role, probably transfers the 4'-phosphopantetheine moiety from coenzyme A (CoA) to a serine residue of a carrier protein domain. In Synechocystis sp. (strain ATCC 27184 / PCC 6803 / Kazusa), this protein is Putative 4'-phosphopantetheinyl transferase slr0495.